We begin with the raw amino-acid sequence, 72 residues long: uncharacterized protein (72 aa).

Belongs to the baculoviridae 8 kDa protein family.

This is an uncharacterized protein from Orgyia pseudotsugata (Douglas-fir tussock moth).